The chain runs to 124 residues: Fluoride-specific ion channel FluC (124 aa).

The next 4 helical transmembrane spans lie at 3–23 (YLLV…INTV), 36–56 (TFFI…YFAF), 66–86 (LFLM…SLDA), and 100–120 (LYVL…LALI). 2 residues coordinate Na(+): Gly74 and Thr77.

It belongs to the fluoride channel Fluc/FEX (TC 1.A.43) family.

It localises to the cell inner membrane. The catalysed reaction is fluoride(in) = fluoride(out). With respect to regulation, na(+) is not transported, but it plays an essential structural role and its presence is essential for fluoride channel function. Its function is as follows. Fluoride-specific ion channel. Important for reducing fluoride concentration in the cell, thus reducing its toxicity. This is Fluoride-specific ion channel FluC from Rhodopseudomonas palustris (strain BisB5).